We begin with the raw amino-acid sequence, 718 residues long: DNA topoisomerase 1 (718 aa).

In terms of domain architecture, Toprim spans His9–Ile151. Residues Glu15 and Asp113 each contribute to the Mg(2+) site. One can recognise a Topo IA-type catalytic domain in the interval Asp162 to Leu571. Residues Ser202–Gln207 form an interaction with DNA region. Tyr320 (O-(5'-phospho-DNA)-tyrosine intermediate) is an active-site residue. The span at His361–Pro371 shows a compositional bias: basic and acidic residues. Residues His361 to Pro380 form a disordered region. 2 C4-type zinc fingers span residues Cys598 to Cys626 and Cys680 to Cys706.

The protein belongs to the type IA topoisomerase family. In terms of assembly, monomer. Mg(2+) serves as cofactor.

It catalyses the reaction ATP-independent breakage of single-stranded DNA, followed by passage and rejoining.. Functionally, releases the supercoiling and torsional tension of DNA, which is introduced during the DNA replication and transcription, by transiently cleaving and rejoining one strand of the DNA duplex. Introduces a single-strand break via transesterification at a target site in duplex DNA. The scissile phosphodiester is attacked by the catalytic tyrosine of the enzyme, resulting in the formation of a DNA-(5'-phosphotyrosyl)-enzyme intermediate and the expulsion of a 3'-OH DNA strand. The free DNA strand then undergoes passage around the unbroken strand, thus removing DNA supercoils. Finally, in the religation step, the DNA 3'-OH attacks the covalent intermediate to expel the active-site tyrosine and restore the DNA phosphodiester backbone. This chain is DNA topoisomerase 1, found in Methanothermobacter thermautotrophicus (strain ATCC 29096 / DSM 1053 / JCM 10044 / NBRC 100330 / Delta H) (Methanobacterium thermoautotrophicum).